The chain runs to 81 residues: Photosystem I iron-sulfur center (81 aa).

4Fe-4S ferredoxin-type domains lie at Ser2–Trp31 and Met39–Tyr68. [4Fe-4S] cluster contacts are provided by Cys11, Cys14, Cys17, Cys21, Cys48, Cys51, Cys54, and Cys58.

The eukaryotic PSI reaction center is composed of at least 11 subunits. It depends on [4Fe-4S] cluster as a cofactor.

Its subcellular location is the plastid. It is found in the chloroplast thylakoid membrane. It catalyses the reaction reduced [plastocyanin] + hnu + oxidized [2Fe-2S]-[ferredoxin] = oxidized [plastocyanin] + reduced [2Fe-2S]-[ferredoxin]. Functionally, apoprotein for the two 4Fe-4S centers FA and FB of photosystem I (PSI); essential for photochemical activity. FB is the terminal electron acceptor of PSI, donating electrons to ferredoxin. The C-terminus interacts with PsaA/B/D and helps assemble the protein into the PSI complex. Required for binding of PsaD and PsaE to PSI. PSI is a plastocyanin/cytochrome c6-ferredoxin oxidoreductase, converting photonic excitation into a charge separation, which transfers an electron from the donor P700 chlorophyll pair to the spectroscopically characterized acceptors A0, A1, FX, FA and FB in turn. This Stigeoclonium helveticum (Green alga) protein is Photosystem I iron-sulfur center.